The chain runs to 107 residues: Small ribosomal subunit protein uS17 (107 aa).

Belongs to the universal ribosomal protein uS17 family. As to quaternary structure, part of the 30S ribosomal subunit.

One of the primary rRNA binding proteins, it binds specifically to the 5'-end of 16S ribosomal RNA. The protein is Small ribosomal subunit protein uS17 of Thermotoga sp. (strain RQ2).